A 423-amino-acid chain; its full sequence is 5-hydroxytryptamine receptor 1A (423 aa).

Residues 1–38 (MEGLSPRQGNNTTSSEGPFGTLGNATGISDVTFSYQVI) lie on the Extracellular side of the membrane. N-linked (GlcNAc...) asparagine glycosylation is found at Asn10, Asn11, and Asn24. Residues 39–59 (TSLLLGTLIFCAVLGNACVVA) form a helical membrane-spanning segment. The Cytoplasmic portion of the chain corresponds to 60–73 (AIALERSLQNVANY). Residues 74 to 98 (LIGSLAVTDLMVSVLVLPMAALYQV) traverse the membrane as a helical segment. Topologically, residues 99–107 (LNKWTLGQV) are extracellular. Residues 108–132 (TCDLFIALDVLCCTSSILHLCAIAL) form a helical membrane-spanning segment. Cys109 and Cys187 are joined by a disulfide. Asp116 and Cys120 together coordinate serotonin. The DRY motif; important for ligand-induced conformation changes motif lies at 133–135 (DRY). Topologically, residues 133 to 152 (DRYWAITDPIDYVNKRTPRR) are cytoplasmic. A helical membrane pass occupies residues 153–174 (AAALISLTWLIGFLISIPPMLG). Over 175–193 (WRTPEDRSDPDACTISKDH) the chain is Extracellular. Residues 194–216 (GYTIYSTFGAFYIPLLLMLVLYG) traverse the membrane as a helical segment. At 217–346 (RIFRAARFRI…LARERKTVKT (130 aa)) the chain is on the cytoplasmic side. The interval 235-277 (RKGADARSGVSPAPQPRKSVNGEPGGREWRQGPGSQAGGPLCT) is disordered. 1D-myo-inositol 4-phosphate contacts are provided by Lys345, Thr346, and Gly352. Residues 347–370 (LGIIMGTFILCWLPFFIVALVLPF) form a helical membrane-spanning segment. Topologically, residues 371–378 (CESSCHMP) are extracellular. A helical membrane pass occupies residues 379–403 (TLLGAIINWLGYSNSLLNPVIYAYF). An NPxxY motif; important for ligand-induced conformation changes and signaling motif is present at residues 396 to 400 (NPVIY). The 1D-myo-inositol 4-phosphate site is built by Phe403, Asn404, and Lys405. Residues 404 to 423 (NKDFQNAFKKIVRCKFCRRR) are Cytoplasmic-facing.

It belongs to the G-protein coupled receptor 1 family. 5-hydroxytryptamine receptor subfamily. HTR1A sub-subfamily. As to quaternary structure, heterodimer; heterodimerizes with GPER1. Interacts with YIF1B. Interacts with GPR39 and GALR1.

Its subcellular location is the cell membrane. It is found in the cell projection. The protein resides in the dendrite. Its activity is regulated as follows. G-protein coupled receptor activity is regulated by lipids: phosphatidylinositol 4-phosphate increases HTR1A-mediated activity. G-protein coupled receptor for 5-hydroxytryptamine (serotonin). Also functions as a receptor for various drugs and psychoactive substances. Ligand binding causes a conformation change that triggers signaling via guanine nucleotide-binding proteins (G proteins) and modulates the activity of downstream effectors, such as adenylate cyclase. HTR1A is coupled to G(i)/G(o) G alpha proteins and mediates inhibitory neurotransmission: signaling inhibits adenylate cyclase activity and activates a phosphatidylinositol-calcium second messenger system that regulates the release of Ca(2+) ions from intracellular stores. Beta-arrestin family members regulate signaling by mediating both receptor desensitization and resensitization processes. This is 5-hydroxytryptamine receptor 1A (HTR1A) from Canis lupus familiaris (Dog).